We begin with the raw amino-acid sequence, 364 residues long: A-type ATP synthase subunit C (364 aa).

This sequence belongs to the V-ATPase V0D/AC39 subunit family. As to quaternary structure, has multiple subunits with at least A(3), B(3), C, D, E, F, H, I and proteolipid K(x).

The protein localises to the cell membrane. In terms of biological role, component of the A-type ATP synthase that produces ATP from ADP in the presence of a proton gradient across the membrane. This is A-type ATP synthase subunit C from Desulfurococcus sp. (strain SY).